A 307-amino-acid chain; its full sequence is Cyclooctat-9-en-7-ol synthase (307 aa).

4 residues coordinate Mg(2+): aspartate 110, asparagine 220, serine 224, and glutamate 228. The short motif at aspartate 110–aspartate 113 is the DDXXD motif; degenerate element. The NSE/DTE motif signature appears at asparagine 220–glutamate 228.

Belongs to the terpene synthase family. In terms of assembly, homodimer. Requires Mg(2+) as cofactor.

It carries out the reaction geranylgeranyl diphosphate + H2O = cyclooctat-9-en-7-ol + diphosphate. Its function is as follows. Catalyzes the cyclization of the linear isoprenoid intermediate geranylgeranyl diphosphate to tricycclic cyclooctat-9-en-7-ol in the cyclooctatin biosynthesis pathway. Cyclooctatin is a potent inhibitor of lysophospholipase. This is Cyclooctat-9-en-7-ol synthase from Streptomyces melanosporofaciens.